Consider the following 209-residue polypeptide: Large ribosomal subunit protein uL3 (209 aa).

This sequence belongs to the universal ribosomal protein uL3 family. As to quaternary structure, part of the 50S ribosomal subunit. Forms a cluster with proteins L14 and L19.

One of the primary rRNA binding proteins, it binds directly near the 3'-end of the 23S rRNA, where it nucleates assembly of the 50S subunit. This is Large ribosomal subunit protein uL3 from Moorella thermoacetica (strain ATCC 39073 / JCM 9320).